Consider the following 95-residue polypeptide: MSVTKKDVAYIAELAKLRFTEAEQEKMTTELNAILHYVDKLNEVDTDGVEPLSSIHDQVNVLREDCLKPSLDNEEALKNAPDRQERFFRVPKVIG.

This sequence belongs to the GatC family. Heterotrimer of A, B and C subunits.

The catalysed reaction is L-glutamyl-tRNA(Gln) + L-glutamine + ATP + H2O = L-glutaminyl-tRNA(Gln) + L-glutamate + ADP + phosphate + H(+). It carries out the reaction L-aspartyl-tRNA(Asn) + L-glutamine + ATP + H2O = L-asparaginyl-tRNA(Asn) + L-glutamate + ADP + phosphate + 2 H(+). Functionally, allows the formation of correctly charged Asn-tRNA(Asn) or Gln-tRNA(Gln) through the transamidation of misacylated Asp-tRNA(Asn) or Glu-tRNA(Gln) in organisms which lack either or both of asparaginyl-tRNA or glutaminyl-tRNA synthetases. The reaction takes place in the presence of glutamine and ATP through an activated phospho-Asp-tRNA(Asn) or phospho-Glu-tRNA(Gln). The sequence is that of Aspartyl/glutamyl-tRNA(Asn/Gln) amidotransferase subunit C from Prosthecochloris aestuarii (strain DSM 271 / SK 413).